The sequence spans 372 residues: sn-glycerol-3-phosphate import ATP-binding protein UgpC (372 aa).

In terms of domain architecture, ABC transporter spans 2 to 233 (LDIQQLVKTY…PASTFVASFI (232 aa)). 35 to 42 (GPSGCGKS) contributes to the ATP binding site.

The protein belongs to the ABC transporter superfamily. sn-glycerol-3-phosphate importer (TC 3.A.1.1.3) family. The complex is composed of two ATP-binding proteins (UgpC), two transmembrane proteins (UgpA and UgpE) and a solute-binding protein (UgpB).

Its subcellular location is the cell inner membrane. It carries out the reaction sn-glycerol 3-phosphate(out) + ATP + H2O = sn-glycerol 3-phosphate(in) + ADP + phosphate + H(+). Part of the ABC transporter complex UgpBAEC involved in sn-glycerol-3-phosphate (G3P) import. Responsible for energy coupling to the transport system. This Vibrio vulnificus (strain CMCP6) protein is sn-glycerol-3-phosphate import ATP-binding protein UgpC.